We begin with the raw amino-acid sequence, 222 residues long: Protein-L-isoaspartate O-methyltransferase (222 aa).

Ser-72 is a catalytic residue.

This sequence belongs to the methyltransferase superfamily. L-isoaspartyl/D-aspartyl protein methyltransferase family.

The protein localises to the cytoplasm. It carries out the reaction [protein]-L-isoaspartate + S-adenosyl-L-methionine = [protein]-L-isoaspartate alpha-methyl ester + S-adenosyl-L-homocysteine. In terms of biological role, catalyzes the methyl esterification of L-isoaspartyl residues in peptides and proteins that result from spontaneous decomposition of normal L-aspartyl and L-asparaginyl residues. It plays a role in the repair and/or degradation of damaged proteins. This chain is Protein-L-isoaspartate O-methyltransferase, found in Picosynechococcus sp. (strain ATCC 27264 / PCC 7002 / PR-6) (Agmenellum quadruplicatum).